Here is a 1003-residue protein sequence, read N- to C-terminus: MSSQPLTLQTMMAAILNFWSEQGCIIHQGYDLEVGAGTFNPATFLQSLGPEPFRTAYIEPSRRPQDGRYGQHPNRLQKYHQLQVILKPVPENFLSLYLESLKVIGLNLVDHDIRFVHDDWENPTIGAWGLGWEVWLNGMEITQLTYFQAVGSKPLDAISGEITYGVERIAMYLQKKNSVYDVMWNDSLTYGDITQYAEQAWSQYNFETANTTMWLKHFDDFSAEALATLDQGLPLPAYDFVIKASHAFNMLDSRGVISVTERTRYIAKIRQLARAAADKYVAWRESLGFPLLKTPPSTPTVTPKKIPTICQPEDFLLEIGSEELPATFVPTGIQQLESLAKKLLADHGIAYKHLEVLGTPRRLALCIEGLSHVTIRPESEKKGPPLSLLFMTDGSVSPQGEQFFSSHGLSISHRSALDQPSAIWRVRSINGTDYLFLVIPEERKETAAILVNELPQLIRSIRFPQKMTWDNGGVEYARPIRWLVALYGDQILPISLGFVSSGNTSWGHRQLDNRQLTIPSSNMYVDTLRSACVIVSQKERRAIIKQGLQNLTGDQIVAIAPEHLIDETVFLTEHPFVISAQFDPAFCSLPKELLIAEMIQHQRYFPTQNMQGEITNRFLIVCDNSPTDSIVEGNEKALAPRLTDGNFLFKQDLLTPLSSFVEKLKSVTYFESLGSLADKTSRLKLHLEEAYALLPLCAKEDIDTAIHYCKADLVSSVVNEFPELQGIMGRYYLQNASLSRAAALAIGEHLQHITLGSSISTTGALLSILDRIDNLLSCFILGLLPTSSHDPYALRRQSLEILTLLYTTQSSVDIEDLFARLIRHFPSSIPNTVWSPEAVLSKLNTFVWGRLRTILSSLGFDKEVIATVLTDNCPKNPLTIIQSAQSIQELKNTQILKTIAAMYNRLKKILASLSFSVTEQMFSLQSAEDLLFKQALDRFVEETTALPISSKDYLHLLKELAQSTELFLDSVRVASDDESTRNQRIALLIAAQKCFGFYAWGVL.

Residues 1–310 (MSSQPLTLQT…VTPKKIPTIC (310 aa)) are glycine--tRNA ligase alpha subunit. The glycine--tRNA ligase beta subunit stretch occupies residues 311 to 1003 (QPEDFLLEIG…CFGFYAWGVL (693 aa)).

The protein belongs to the class-II aminoacyl-tRNA synthetase family.

The protein resides in the cytoplasm. It carries out the reaction tRNA(Gly) + glycine + ATP = glycyl-tRNA(Gly) + AMP + diphosphate. This chain is Glycine--tRNA ligase (glyQS), found in Chlamydia trachomatis serovar D (strain ATCC VR-885 / DSM 19411 / UW-3/Cx).